We begin with the raw amino-acid sequence, 296 residues long: Ribosomal RNA small subunit methyltransferase H (296 aa).

S-adenosyl-L-methionine-binding positions include Gly38–His40, Glu57, Phe80, Asp103, and His110.

This sequence belongs to the methyltransferase superfamily. RsmH family.

It localises to the cytoplasm. The catalysed reaction is cytidine(1402) in 16S rRNA + S-adenosyl-L-methionine = N(4)-methylcytidine(1402) in 16S rRNA + S-adenosyl-L-homocysteine + H(+). Specifically methylates the N4 position of cytidine in position 1402 (C1402) of 16S rRNA. This Borrelia garinii subsp. bavariensis (strain ATCC BAA-2496 / DSM 23469 / PBi) (Borreliella bavariensis) protein is Ribosomal RNA small subunit methyltransferase H.